The following is a 277-amino-acid chain: 4-hydroxy-tetrahydrodipicolinate reductase (277 aa).

9–14 (GATGRM) contributes to the NAD(+) binding site. Lysine 37 is a binding site for NADP(+). 75–77 (GTS) contacts NAD(+). Histidine 132 acts as the Proton donor/acceptor in catalysis. Catalysis depends on lysine 136, which acts as the Proton donor. Residue 142–143 (GT) participates in (S)-2,3,4,5-tetrahydrodipicolinate binding. Disordered stretches follow at residues 154–173 (ARGARGPVQAPHTDQRARGQ) and 247–277 (ERAAQAAAGDAPSGPVDDGGPSGQAATVTSA). Low complexity predominate over residues 250–265 (AQAAAGDAPSGPVDDG).

The protein belongs to the DapB family.

It localises to the cytoplasm. It catalyses the reaction (S)-2,3,4,5-tetrahydrodipicolinate + NAD(+) + H2O = (2S,4S)-4-hydroxy-2,3,4,5-tetrahydrodipicolinate + NADH + H(+). It carries out the reaction (S)-2,3,4,5-tetrahydrodipicolinate + NADP(+) + H2O = (2S,4S)-4-hydroxy-2,3,4,5-tetrahydrodipicolinate + NADPH + H(+). It participates in amino-acid biosynthesis; L-lysine biosynthesis via DAP pathway; (S)-tetrahydrodipicolinate from L-aspartate: step 4/4. Catalyzes the conversion of 4-hydroxy-tetrahydrodipicolinate (HTPA) to tetrahydrodipicolinate. This chain is 4-hydroxy-tetrahydrodipicolinate reductase, found in Clavibacter michiganensis subsp. michiganensis (strain NCPPB 382).